The following is a 405-amino-acid chain: Histone deacetylase clr6 (405 aa).

Residues 6 to 318 (KKVSYFYDED…WTYETGLLAG (313 aa)) form a histone deacetylase region. Histidine 138 is a catalytic residue.

Belongs to the histone deacetylase family. HD type 1 subfamily. Heterotetramer of alp13, clr6, prw1 and pst2.

It is found in the nucleus. It catalyses the reaction N(6)-acetyl-L-lysyl-[histone] + H2O = L-lysyl-[histone] + acetate. Its function is as follows. Responsible for the deacetylation of lysine residues on the N-terminal part of the core histones (H2A, H2B, H3 and H4). Histone deacetylation gives a tag for epigenetic repression and plays an important role in transcriptional regulation, cell cycle progression and developmental events. Histone deacetylases act via the formation of large multiprotein complexes. Has a role in chromatin assembly and chromosome segregation. The chain is Histone deacetylase clr6 (clr6) from Schizosaccharomyces pombe (strain 972 / ATCC 24843) (Fission yeast).